The following is a 510-amino-acid chain: Probable lysine--tRNA ligase, cytoplasmic (510 aa).

This sequence belongs to the class-II aminoacyl-tRNA synthetase family. As to quaternary structure, homodimer.

It is found in the cytoplasm. It carries out the reaction tRNA(Lys) + L-lysine + ATP = L-lysyl-tRNA(Lys) + AMP + diphosphate. This is Probable lysine--tRNA ligase, cytoplasmic from Encephalitozoon cuniculi (strain GB-M1) (Microsporidian parasite).